Reading from the N-terminus, the 591-residue chain is Aspartate--tRNA(Asp/Asn) ligase (591 aa).

An L-aspartate-binding site is contributed by glutamate 176. Residues 200 to 203 are aspartate; it reads QLFK. Arginine 222 is a binding site for L-aspartate. Residues 222–224 and glutamine 231 contribute to the ATP site; that span reads RDE. Histidine 450 provides a ligand contact to L-aspartate. Glutamate 484 contacts ATP. An L-aspartate-binding site is contributed by arginine 491. 536–539 contacts ATP; sequence GLDR.

The protein belongs to the class-II aminoacyl-tRNA synthetase family. Type 1 subfamily. Homodimer.

Its subcellular location is the cytoplasm. The enzyme catalyses tRNA(Asx) + L-aspartate + ATP = L-aspartyl-tRNA(Asx) + AMP + diphosphate. In terms of biological role, aspartyl-tRNA synthetase with relaxed tRNA specificity since it is able to aspartylate not only its cognate tRNA(Asp) but also tRNA(Asn). Reaction proceeds in two steps: L-aspartate is first activated by ATP to form Asp-AMP and then transferred to the acceptor end of tRNA(Asp/Asn). The chain is Aspartate--tRNA(Asp/Asn) ligase from Bacillus cereus (strain ATCC 14579 / DSM 31 / CCUG 7414 / JCM 2152 / NBRC 15305 / NCIMB 9373 / NCTC 2599 / NRRL B-3711).